The following is a 497-amino-acid chain: C4-dicarboxylate transport protein (497 aa).

The next 8 helical transmembrane spans lie at 27–45, 60–82, 95–117, 168–185, 205–227, 237–259, 348–370, and 374–393; these read LYVQ…GYFY, IMLV…IAGM, AMIY…ANVV, ILQV…LAIV, RLVA…FTIG, LAML…LGAV, ILLL…AGFI, and ATLS…ILGI. A disordered region spans residues 466-497; that stretch reads ADRTLAGRPGGRDSRRIAPDHSAQVFGGPLSL. The segment covering 475–484 has biased composition (basic and acidic residues); that stretch reads GGRDSRRIAP.

It belongs to the dicarboxylate/amino acid:cation symporter (DAACS) (TC 2.A.23) family.

Its subcellular location is the cell inner membrane. Its function is as follows. Responsible for the transport of dicarboxylates such as succinate, fumarate, and malate from the periplasm across the inner membrane. This transport system plays an essential role in the energy supply of tropical rhizobium-legume symbionts. This is C4-dicarboxylate transport protein (dctA1) from Sinorhizobium fredii (strain NBRC 101917 / NGR234).